Reading from the N-terminus, the 154-residue chain is Egg-lysin (154 aa).

An N-terminal signal peptide occupies residues 1-18 (MKLLVLCIFAMMATLAMS).

As to quaternary structure, homodimer. As to expression, sperm.

In terms of biological role, dissolves the egg vitelline layer nonenzymatically during fertilization. It creates a hole of about 3 mu-m in diameter through which the sperm pass. The chain is Egg-lysin from Haliotis walallensis (Flat abalone).